Consider the following 163-residue polypeptide: MRVLGVDPGMALLGYGVVEGGEPLRALSFGVVSTPAHLPVERRLVVLHDELAQLLEHWQPDVVALEQLFFARNVTTALAVGQARGIVLLLCGQRTIPVVEYTPAQVKQAVGGYGRARKREMQEMVRLLLRLPVLPQPDDAADALALAVCYFQYSRAAQLERFT.

Catalysis depends on residues D7, E66, and D139. Residues D7, E66, and D139 each coordinate Mg(2+).

It belongs to the RuvC family. Homodimer which binds Holliday junction (HJ) DNA. The HJ becomes 2-fold symmetrical on binding to RuvC with unstacked arms; it has a different conformation from HJ DNA in complex with RuvA. In the full resolvosome a probable DNA-RuvA(4)-RuvB(12)-RuvC(2) complex forms which resolves the HJ. The cofactor is Mg(2+).

It is found in the cytoplasm. The catalysed reaction is Endonucleolytic cleavage at a junction such as a reciprocal single-stranded crossover between two homologous DNA duplexes (Holliday junction).. The RuvA-RuvB-RuvC complex processes Holliday junction (HJ) DNA during genetic recombination and DNA repair. Endonuclease that resolves HJ intermediates. Cleaves cruciform DNA by making single-stranded nicks across the HJ at symmetrical positions within the homologous arms, yielding a 5'-phosphate and a 3'-hydroxyl group; requires a central core of homology in the junction. The consensus cleavage sequence is 5'-(A/T)TT(C/G)-3'. Cleavage occurs on the 3'-side of the TT dinucleotide at the point of strand exchange. HJ branch migration catalyzed by RuvA-RuvB allows RuvC to scan DNA until it finds its consensus sequence, where it cleaves and resolves the cruciform DNA. The protein is Crossover junction endodeoxyribonuclease RuvC of Thermomicrobium roseum (strain ATCC 27502 / DSM 5159 / P-2).